The chain runs to 425 residues: Serine hydroxymethyltransferase (425 aa).

(6S)-5,6,7,8-tetrahydrofolate is bound by residues Leu120 and 124-126 (GHL). An N6-(pyridoxal phosphate)lysine modification is found at Lys229. Residue 353–355 (SPF) coordinates (6S)-5,6,7,8-tetrahydrofolate.

Belongs to the SHMT family. As to quaternary structure, homodimer. Pyridoxal 5'-phosphate serves as cofactor.

It is found in the cytoplasm. It carries out the reaction (6R)-5,10-methylene-5,6,7,8-tetrahydrofolate + glycine + H2O = (6S)-5,6,7,8-tetrahydrofolate + L-serine. The protein operates within one-carbon metabolism; tetrahydrofolate interconversion. It participates in amino-acid biosynthesis; glycine biosynthesis; glycine from L-serine: step 1/1. Catalyzes the reversible interconversion of serine and glycine with tetrahydrofolate (THF) serving as the one-carbon carrier. This reaction serves as the major source of one-carbon groups required for the biosynthesis of purines, thymidylate, methionine, and other important biomolecules. Also exhibits THF-independent aldolase activity toward beta-hydroxyamino acids, producing glycine and aldehydes, via a retro-aldol mechanism. This chain is Serine hydroxymethyltransferase, found in Thermosynechococcus vestitus (strain NIES-2133 / IAM M-273 / BP-1).